The chain runs to 365 residues: Aminomethyltransferase (365 aa).

This sequence belongs to the GcvT family. In terms of assembly, the glycine cleavage system is composed of four proteins: P, T, L and H.

The catalysed reaction is N(6)-[(R)-S(8)-aminomethyldihydrolipoyl]-L-lysyl-[protein] + (6S)-5,6,7,8-tetrahydrofolate = N(6)-[(R)-dihydrolipoyl]-L-lysyl-[protein] + (6R)-5,10-methylene-5,6,7,8-tetrahydrofolate + NH4(+). Functionally, the glycine cleavage system catalyzes the degradation of glycine. This is Aminomethyltransferase from Serratia proteamaculans (strain 568).